A 448-amino-acid polypeptide reads, in one-letter code: Protein TraN (448 aa).

Disordered stretches follow at residues Asn243–Glu273 and Glu411–Ser448. The segment covering Gly246–Ser261 has biased composition (low complexity). Residues Pro262 to Ser271 are compositionally biased toward polar residues. A compositionally biased stretch (basic and acidic residues) spans Arg421–Arg437. Positions Ser438 to Ser448 are enriched in polar residues.

It to H.influenzae HI_1407.

This chain is Protein TraN (traN), found in Escherichia coli.